Here is a 391-residue protein sequence, read N- to C-terminus: NAD(P)H-quinone oxidoreductase subunit H, chloroplastic (391 aa).

It belongs to the complex I 49 kDa subunit family. NDH is composed of at least 16 different subunits, 5 of which are encoded in the nucleus.

The protein resides in the plastid. It localises to the chloroplast thylakoid membrane. It carries out the reaction a plastoquinone + NADH + (n+1) H(+)(in) = a plastoquinol + NAD(+) + n H(+)(out). The enzyme catalyses a plastoquinone + NADPH + (n+1) H(+)(in) = a plastoquinol + NADP(+) + n H(+)(out). Functionally, NDH shuttles electrons from NAD(P)H:plastoquinone, via FMN and iron-sulfur (Fe-S) centers, to quinones in the photosynthetic chain and possibly in a chloroplast respiratory chain. The immediate electron acceptor for the enzyme in this species is believed to be plastoquinone. Couples the redox reaction to proton translocation, and thus conserves the redox energy in a proton gradient. This is NAD(P)H-quinone oxidoreductase subunit H, chloroplastic from Chaetosphaeridium globosum (Charophycean green alga).